An 83-amino-acid polypeptide reads, in one-letter code: uncharacterized protein (83 aa).

This is an uncharacterized protein from Escherichia phage 186 (Bacteriophage 186).